Here is a 21-residue protein sequence, read N- to C-terminus: Cold shock protein CspSt (21 aa).

One can recognise a CSD domain in the interval K1–D21.

It is found in the cytoplasm. This chain is Cold shock protein CspSt, found in Streptococcus thermophilus.